Consider the following 79-residue polypeptide: MDLKVVAVSFLLLVLCSEAAGYQLLTWEQANTAVKGVLDKVHSTGVEKLRDIYDKSVDAVGTYTSILTDQLYHWWCGEQ.

A signal peptide spans 1 to 21 (MDLKVVAVSFLLLVLCSEAAG). Positions 45–52 (GVEKLRDI) are lipid binding. The interval 56-79 (SVDAVGTYTSILTDQLYHWWCGEQ) is lipoprotein lipase cofactor.

It belongs to the apolipoprotein C2 family. In terms of processing, proapolipoprotein C-II is synthesized as a sialic acid containing glycoprotein which is subsequently desialylated prior to its proteolytic processing. Post-translationally, proapolipoprotein C-II, the major form found in plasma undergoes proteolytic cleavage of its N-terminal hexapeptide to generate apolipoprotein C-II, which occurs as the minor form in plasma.

It is found in the secreted. Its function is as follows. Component of chylomicrons, very low-density lipoproteins (VLDL), low-density lipoproteins (LDL), and high-density lipoproteins (HDL) in plasma. Plays an important role in lipoprotein metabolism as an activator of lipoprotein lipase. Both proapolipoprotein C-II and apolipoprotein C-II can activate lipoprotein lipase. In Alligator mississippiensis (American alligator), this protein is Apolipoprotein C-II (APOC2).